We begin with the raw amino-acid sequence, 140 residues long: uncharacterized protein (140 aa).

A coiled-coil region spans residues 27-65 (LLGEVSELELQKICFNRSLRNEINQLEEQNDISFVRVER).

This is an uncharacterized protein from Pasteurella multocida (strain Pm70).